A 444-amino-acid polypeptide reads, in one-letter code: Proline--tRNA ligase (444 aa).

The protein belongs to the class-II aminoacyl-tRNA synthetase family. ProS type 2 subfamily. As to quaternary structure, homodimer.

The protein resides in the cytoplasm. It carries out the reaction tRNA(Pro) + L-proline + ATP = L-prolyl-tRNA(Pro) + AMP + diphosphate. Functionally, catalyzes the attachment of proline to tRNA(Pro) in a two-step reaction: proline is first activated by ATP to form Pro-AMP and then transferred to the acceptor end of tRNA(Pro). This Methylobacterium sp. (strain 4-46) protein is Proline--tRNA ligase.